Reading from the N-terminus, the 119-residue chain is Large ribosomal subunit protein bL20c (119 aa).

The protein belongs to the bacterial ribosomal protein bL20 family.

The protein resides in the plastid. The protein localises to the chloroplast. In terms of biological role, binds directly to 23S ribosomal RNA and is necessary for the in vitro assembly process of the 50S ribosomal subunit. It is not involved in the protein synthesizing functions of that subunit. The protein is Large ribosomal subunit protein bL20c (rpl20) of Oryza sativa (Rice).